Consider the following 107-residue polypeptide: Thiosulfate sulfurtransferase GlpE (107 aa).

The Rhodanese domain maps to 16-104 (KKRDIVIADV…WKAHHPTSDA (89 aa)). Cys-64 serves as the catalytic Cysteine persulfide intermediate.

Belongs to the GlpE family.

It localises to the cytoplasm. The enzyme catalyses thiosulfate + hydrogen cyanide = thiocyanate + sulfite + 2 H(+). The catalysed reaction is thiosulfate + [thioredoxin]-dithiol = [thioredoxin]-disulfide + hydrogen sulfide + sulfite + 2 H(+). Functionally, transferase that catalyzes the transfer of sulfur from thiosulfate to thiophilic acceptors such as cyanide or dithiols. May function in a CysM-independent thiosulfate assimilation pathway by catalyzing the conversion of thiosulfate to sulfite, which can then be used for L-cysteine biosynthesis. The sequence is that of Thiosulfate sulfurtransferase GlpE from Coxiella burnetii (strain CbuK_Q154) (Coxiella burnetii (strain Q154)).